A 276-amino-acid polypeptide reads, in one-letter code: S-adenosylmethionine decarboxylase proenzyme (276 aa).

Catalysis depends on Ser124, which acts as the Schiff-base intermediate with substrate; via pyruvic acid. Ser124 is subject to Pyruvic acid (Ser); by autocatalysis. His129 acts as the Proton acceptor; for processing activity in catalysis. The active-site Proton donor; for catalytic activity is the Cys152.

This sequence belongs to the prokaryotic AdoMetDC family. Type 2 subfamily. In terms of assembly, heterooctamer of four alpha and four beta chains arranged as a tetramer of alpha/beta heterodimers. The cofactor is pyruvate. Is synthesized initially as an inactive proenzyme. Formation of the active enzyme involves a self-maturation process in which the active site pyruvoyl group is generated from an internal serine residue via an autocatalytic post-translational modification. Two non-identical subunits are generated from the proenzyme in this reaction, and the pyruvate is formed at the N-terminus of the alpha chain, which is derived from the carboxyl end of the proenzyme. The post-translation cleavage follows an unusual pathway, termed non-hydrolytic serinolysis, in which the side chain hydroxyl group of the serine supplies its oxygen atom to form the C-terminus of the beta chain, while the remainder of the serine residue undergoes an oxidative deamination to produce ammonia and the pyruvoyl group blocking the N-terminus of the alpha chain.

It catalyses the reaction S-adenosyl-L-methionine + H(+) = S-adenosyl 3-(methylsulfanyl)propylamine + CO2. The protein operates within amine and polyamine biosynthesis; S-adenosylmethioninamine biosynthesis; S-adenosylmethioninamine from S-adenosyl-L-methionine: step 1/1. Its function is as follows. Catalyzes the decarboxylation of S-adenosylmethionine to S-adenosylmethioninamine (dcAdoMet), the propylamine donor required for the synthesis of the polyamines spermine and spermidine from the diamine putrescine. The sequence is that of S-adenosylmethionine decarboxylase proenzyme from Desulfitobacterium hafniense (strain Y51).